Reading from the N-terminus, the 635-residue chain is Threonine--tRNA ligase (635 aa).

Residues 1–61 (MINIKFPDGS…NHDCELRLIT (61 aa)) form the TGS domain. A catalytic region spans residues 242–533 (DHRKIGKALD…LIEHYAGNMP (292 aa)). Positions 333, 384, and 510 each coordinate Zn(2+).

This sequence belongs to the class-II aminoacyl-tRNA synthetase family. Homodimer. The cofactor is Zn(2+).

Its subcellular location is the cytoplasm. It carries out the reaction tRNA(Thr) + L-threonine + ATP = L-threonyl-tRNA(Thr) + AMP + diphosphate + H(+). Functionally, catalyzes the attachment of threonine to tRNA(Thr) in a two-step reaction: L-threonine is first activated by ATP to form Thr-AMP and then transferred to the acceptor end of tRNA(Thr). Also edits incorrectly charged L-seryl-tRNA(Thr). This chain is Threonine--tRNA ligase, found in Francisella philomiragia subsp. philomiragia (strain ATCC 25017 / CCUG 19701 / FSC 153 / O#319-036).